Reading from the N-terminus, the 82-residue chain is Diphthamide biosynthesis protein 3 (82 aa).

The region spanning 4–60 is the DPH-type MB domain; the sequence is FHDEVEIEDFQYDEDSETYFYPCPCGDNFSITKEDLENGEDVATCPSCSLIIKVIYD. Cys-26, Cys-28, Cys-48, and Cys-51 together coordinate Fe cation.

Belongs to the DPH3 family. As to quaternary structure, component of the 2-(3-amino-3-carboxypropyl)histidine synthase complex composed of DPH1, DPH2, DPH3 and a NADH-dependent reductase. Interacts with SERGEF. Fe(2+) serves as cofactor.

The protein localises to the cytoplasm. Its subcellular location is the nucleus. It carries out the reaction [3Fe-4S](1+)-[protein] + Fe(2+)-[Dph3] = [3Fe-4S](0)-[protein] + Fe(3+)-[Dph3]. The enzyme catalyses 2 [3Fe-4S](0)-[protein] + 2 Fe(2+)-[Dph3] + NADH = 2 [4Fe-4S](1+)-[protein] + 2 [Dph3] + NAD(+) + H(+). It participates in protein modification; peptidyl-diphthamide biosynthesis. Required for the first step of diphthamide biosynthesis, a post-translational modification of histidine which occurs in elongation factor 2. DPH1 and DPH2 transfer a 3-amino-3-carboxypropyl (ACP) group from S-adenosyl-L-methionine (SAM) to a histidine residue, the reaction is assisted by a reduction system comprising DPH3 and a NADH-dependent reductase. Acts as an electron donor to reduce the Fe-S cluster in DPH1-DPH2 keeping the [4Fe-4S] clusters in the active and reduced state. Restores iron to DPH1-DPH2 iron-sulfur clusters which have degraded from [4Fe-4S] to [3Fe-4S] by donating an iron atom to reform [4Fe-4S] clusters, in a manner dependent on the presence of elongation factor 2 and SAM. Associates with the elongator complex and is required for tRNA Wobble base modifications mediated by the elongator complex. The elongator complex is required for multiple tRNA modifications, including mcm5U (5-methoxycarbonylmethyl uridine), mcm5s 2U (5-methoxycarbonylmethyl-2-thiouridine), and ncm5U (5-carbamoylmethyl uridine). In Cricetulus griseus (Chinese hamster), this protein is Diphthamide biosynthesis protein 3 (DPH3).